The chain runs to 256 residues: Probable fructose-2,6-bisphosphatase TIGAR A (256 aa).

Residue H11 is the Tele-phosphohistidine intermediate of the active site. E89 (proton donor/acceptor) is an active-site residue. The tract at residues 147-170 is disordered; sequence HQDKVQDGGTSSADESTEAPAGLA.

It belongs to the phosphoglycerate mutase family.

The protein resides in the cytoplasm. It is found in the nucleus. Its subcellular location is the mitochondrion. The catalysed reaction is beta-D-fructose 2,6-bisphosphate + H2O = beta-D-fructose 6-phosphate + phosphate. In terms of biological role, fructose-bisphosphatase hydrolyzing fructose-2,6-bisphosphate as well as fructose-1,6-bisphosphate. Acts as a negative regulator of glycolysis by lowering intracellular levels of fructose-2,6-bisphosphate in a p53/TP53-dependent manner, resulting in the pentose phosphate pathway (PPP) activation and NADPH production. Contributes to the generation of reduced glutathione to cause a decrease in intracellular reactive oxygen species (ROS) content, correlating with its ability to protect cells from oxidative or metabolic stress-induced cell death. May play a role in mitophagy inhibition. This chain is Probable fructose-2,6-bisphosphatase TIGAR A, found in Danio rerio (Zebrafish).